A 690-amino-acid polypeptide reads, in one-letter code: SWI/SNF-related matrix-associated actin-dependent regulator of chromatin subfamily A-like protein 1 homolog (690 aa).

The tract at residues 30 to 49 (MQAAANATASTSSAAPPAPP) is disordered. Residues 31–44 (QAAANATASTSSAA) show a composition bias toward low complexity. An HARP domain is found at 92–170 (PTSLIKPTIG…AVKVELEPLP (79 aa)). The region spanning 209 to 367 (IFALERDGRI…FTQIRLIDHK (159 aa)) is the Helicase ATP-binding domain. 222 to 229 (DEMGLGKS) is a binding site for ATP. The short motif at 316 to 319 (DESH) is the DESH box element. A Nuclear localization signal motif is present at residues 411 to 428 (RRLKADVLKDLPEKRREV). The Helicase C-terminal domain occupies 482–639 (ILENYFYPDA…TFRTADKMHL (158 aa)).

It belongs to the SNF2/RAD54 helicase family. SMARCAL1 subfamily.

Its subcellular location is the nucleus. The enzyme catalyses ATP + H2O = ADP + phosphate + H(+). In terms of biological role, ATP-dependent annealing helicase that catalyzes the rewinding of the stably unwound DNA. This is SWI/SNF-related matrix-associated actin-dependent regulator of chromatin subfamily A-like protein 1 homolog from Caenorhabditis elegans.